A 387-amino-acid chain; its full sequence is Zinc finger protein neuro-d4 (387 aa).

Glycyl lysine isopeptide (Lys-Gly) (interchain with G-Cter in SUMO2) cross-links involve residues lysine 106, lysine 129, and lysine 133. A C2H2-type zinc finger spans residues 195 to 218; sequence YVCDICGKRYKNRPGLSYHYTHTH. 2 PHD-type zinc fingers span residues 271–328 and 325–375; these read NGYC…CKSC and CKSC…CLRH. Residues cysteine 274, cysteine 277, cysteine 293, cysteine 296, histidine 301, cysteine 304, cysteine 322, cysteine 325, cysteine 328, cysteine 331, cysteine 343, cysteine 346, histidine 351, cysteine 354, cysteine 369, and cysteine 372 each contribute to the Zn(2+) site.

This sequence belongs to the requiem/DPF family. Component of neuron-specific chromatin remodeling complex (nBAF complex) composed of at least, ARID1A/BAF250A or ARID1B/BAF250B, SMARCD1/BAF60A, SMARCD3/BAF60C, SMARCA2/BRM/BAF190B, SMARCA4/BRG1/BAF190A, SMARCB1/BAF47, SMARCC1/BAF155, SMARCE1/BAF57, SMARCC2/BAF170, DPF1/BAF45B, DPF3/BAF45C, ACTL6B/BAF53B and actin.

Its subcellular location is the cytoplasm. The protein localises to the nucleus. In terms of biological role, may have an important role in developing neurons by participating in regulation of cell survival, possibly as a neurospecific transcription factor. Belongs to the neuron-specific chromatin remodeling complex (nBAF complex). During neural development a switch from a stem/progenitor to a postmitotic chromatin remodeling mechanism occurs as neurons exit the cell cycle and become committed to their adult state. The transition from proliferating neural stem/progenitor cells to postmitotic neurons requires a switch in subunit composition of the npBAF and nBAF complexes. As neural progenitors exit mitosis and differentiate into neurons, npBAF complexes which contain ACTL6A/BAF53A and PHF10/BAF45A, are exchanged for homologous alternative ACTL6B/BAF53B and DPF1/BAF45B or DPF3/BAF45C subunits in neuron-specific complexes (nBAF). The npBAF complex is essential for the self-renewal/proliferative capacity of the multipotent neural stem cells. The nBAF complex along with CREST plays a role regulating the activity of genes essential for dendrite growth. The chain is Zinc finger protein neuro-d4 from Homo sapiens (Human).